Consider the following 514-residue polypeptide: MRFELEGRIIFSKDVSEETQKDIIEVLENGDIFLKGVPEGKENEASKIEGYEFEGKDLKLNMTSGTYTRAHEGIVRLKKPIMEKVGRKHQIGIRDVAIDTYVVTITATPSKVAELKGLKVPECEVELDNEKIKILFKNLGDGELKRNIIDRAIKFVKTELDKQEQDLTFEVCKIAPGTIVSDYKATREITFDKDPTELAEPYGWVKRFPGRGQWFYTAPMAKLFRAFESLIVEECIEKVGFDECLFPKLIPLDVMYKMRYLEGLPEGMYYVCPPKREPEMFRDFVNEMMIKKEIPIDKLKTLLRDPGYVLAPAQCEPFYTFFDHELVDVDSPSKFFDKSGWTYRWEGGGAKGLDRVNEFLRGECVWMGSPEFVEKVRDDTLKYAEKLAEKLDLEYWTEVGDDPFYLEGRKNEDRGIEFPDVPKYEMRLWLPHVKDERKGVAVTSANIHGTHFVEGFGIKDYKDRKVWTGCTGYGLSRWLIGFLAQYGYNYEDWPEIIQKKVGKLPEIPKLITWP.

A313 serves as a coordination point for L-serine. C315 is a Zn(2+) binding site. R344 is an L-serine binding site. ATP is bound by residues 344–346 (RWE) and 355–356 (RV). 361–363 (RGE) lines the L-serine pocket. 2 residues coordinate Zn(2+): E363 and C470. Position 477 (R477) interacts with ATP.

The protein belongs to the class-II aminoacyl-tRNA synthetase family. Type-2 seryl-tRNA synthetase subfamily. In terms of assembly, homodimer. The cofactor is Zn(2+).

It is found in the cytoplasm. The catalysed reaction is tRNA(Ser) + L-serine + ATP = L-seryl-tRNA(Ser) + AMP + diphosphate + H(+). It catalyses the reaction tRNA(Sec) + L-serine + ATP = L-seryl-tRNA(Sec) + AMP + diphosphate + H(+). It participates in aminoacyl-tRNA biosynthesis; selenocysteinyl-tRNA(Sec) biosynthesis; L-seryl-tRNA(Sec) from L-serine and tRNA(Sec): step 1/1. Functionally, catalyzes the attachment of serine to tRNA(Ser). Is also able to aminoacylate tRNA(Sec) with serine, to form the misacylated tRNA L-seryl-tRNA(Sec), which will be further converted into selenocysteinyl-tRNA(Sec). This chain is Type-2 serine--tRNA ligase (serS), found in Methanococcus maripaludis (strain DSM 14266 / JCM 13030 / NBRC 101832 / S2 / LL).